The primary structure comprises 136 residues: Large-conductance mechanosensitive channel (136 aa).

Helical transmembrane passes span 10-30 (FAMR…AAFG) and 76-96 (GAFI…FIAI).

The protein belongs to the MscL family. In terms of assembly, homopentamer.

The protein resides in the cell inner membrane. In terms of biological role, channel that opens in response to stretch forces in the membrane lipid bilayer. May participate in the regulation of osmotic pressure changes within the cell. The sequence is that of Large-conductance mechanosensitive channel from Pectobacterium atrosepticum (strain SCRI 1043 / ATCC BAA-672) (Erwinia carotovora subsp. atroseptica).